The primary structure comprises 575 residues: Alpha-(1,6)-fucosyltransferase (575 aa).

Over 1–9 the chain is Cytoplasmic; it reads MRPWTGSWR. Residues 10 to 30 traverse the membrane as a helical; Signal-anchor for type II membrane protein segment; it reads WIMLILFAWGTLLFYIGGHLV. Residues 31-575 lie on the Lumenal side of the membrane; sequence RDNDHSDHSS…KYPTYPEADK (545 aa). Cystine bridges form between Cys-204–Cys-266, Cys-212–Cys-230, and Cys-218–Cys-222. The 288-residue stretch at 206 to 493 folds into the GT23 domain; sequence KAKKLVCNIN…PDASANFRSL (288 aa). Phosphoserine is present on Ser-278. Residues 299–305 carry the SH3-binding motif; it reads PRPPYLP. The tract at residues 365-366 is important for donor substrate binding; the sequence is RR. Residues Cys-465 and Cys-472 are joined by a disulfide bond. Residues 502–563 form the SH3 domain; sequence PNAHNQIAIY…PSYKVREKIE (62 aa).

The protein belongs to the glycosyltransferase 23 family. Post-translationally, tyrosine phosphorylated by PKDCC/VLK. In terms of tissue distribution, highest expression in brain.

It localises to the golgi apparatus. The protein localises to the golgi stack membrane. It catalyses the reaction N(4)-{beta-D-GlcNAc-(1-&gt;2)-alpha-D-Man-(1-&gt;3)-[beta-D-GlcNAc-(1-&gt;2)-alpha-D-Man-(1-&gt;6)]-beta-D-Man-(1-&gt;4)-beta-D-GlcNAc-(1-&gt;4)-beta-D-GlcNAc}-L-asparaginyl-[protein] + GDP-beta-L-fucose = an N(4)-{beta-D-GlcNAc-(1-&gt;2)-alpha-D-Man-(1-&gt;3)-[beta-D-GlcNAc-(1-&gt;2)-alpha-D-Man-(1-&gt;6)]-beta-D-Man-(1-&gt;4)-beta-D-GlcNAc-(1-&gt;4)-[alpha-L-Fuc-(1-&gt;6)]-beta-D-GlcNAc}-L-asparaginyl-[protein] + GDP + H(+). The protein operates within protein modification; protein glycosylation. In terms of biological role, catalyzes the addition of fucose in alpha 1-6 linkage to the first GlcNAc residue, next to the peptide chains in N-glycans. This Sus scrofa (Pig) protein is Alpha-(1,6)-fucosyltransferase (FUT8).